A 69-amino-acid polypeptide reads, in one-letter code: Large ribosomal subunit protein bL31 (69 aa).

The Zn(2+) site is built by C16, C18, C37, and C40.

It belongs to the bacterial ribosomal protein bL31 family. Type A subfamily. Part of the 50S ribosomal subunit. Zn(2+) is required as a cofactor.

Binds the 23S rRNA. The chain is Large ribosomal subunit protein bL31 from Buchnera aphidicola subsp. Cinara cedri (strain Cc).